We begin with the raw amino-acid sequence, 456 residues long: Elongator complex protein 4 (456 aa).

Residues 1-11 (MSFRKRGEILN) are compositionally biased toward basic and acidic residues. A disordered region spans residues 1 to 91 (MSFRKRGEIL…SQPTTSTGSA (91 aa)). An Omega-N-methylarginine modification is found at Arg-13. A compositionally biased stretch (low complexity) spans 18-27 (RGPLLRGPPR). Positions 57–66 (NIADESKTKM) are enriched in basic and acidic residues. A compositionally biased stretch (low complexity) spans 77-90 (PSPATSQPTTSTGS). Residue Ser-222 is modified to Phosphoserine. The interval 424–444 (EGSAASEQSHSHSHSDEISHN) is disordered. A compositionally biased stretch (basic and acidic residues) spans 432 to 442 (SHSHSHSDEIS).

The protein belongs to the ELP4 family. As to quaternary structure, component of the elongator complex which consists of ELP1/IKI3, ELP2, ELP3, ELP4, ELP5/IKI1 and ELP6. The elongator complex is composed of two copies of the Elp123 subcomplex (composed of ELP1/IKI3, ELP2 and ELP3) and two copies of the Elp456 subcomplex (composed of ELP4, ELP5/IKI1 and ELP6). The Elp123 subcomplex forms a two-lobed scaffold, which binds the Elp456 subcomplex asymmetrically. In each lobe, ELP2 is tightly sandwiched between ELP1/IKI3 and ELP3. The Elp123 subcomplex binds tRNA through ELP1/IKI3 and ELP3 and can bind 2 tRNAs simultaneously. tRNA-binding by the Elp123 subcomplex induces conformational rearrangements which precisely position the targeted anticodon base in the active site. The Elp456 subcomplex binds tRNA and has ATPase activity. ELP4 interacts with KTI12.

It localises to the cytoplasm. The protein resides in the nucleus. The protein operates within tRNA modification; 5-methoxycarbonylmethyl-2-thiouridine-tRNA biosynthesis. Component of the elongator complex, a multiprotein complex which is required for multiple tRNA modifications, including mcm5U (5-methoxycarbonylmethyl uridine), mcm5s2U (5-methoxycarbonylmethyl-2-thiouridine), and ncm5U (5-carbamoylmethyl uridine). The elongator complex catalyzes formation of carboxymethyluridine in the wobble base at position 34 in tRNAs. It functions as a gamma-toxin target (TOT); disruption of the complex confers resistance to Kluyveromyces lactis toxin zymocin (pGKL1 killer toxin). May also be involved in sensitivity to Pichia inositovora toxin. The polypeptide is Elongator complex protein 4 (Saccharomyces cerevisiae (strain ATCC 204508 / S288c) (Baker's yeast)).